A 217-amino-acid chain; its full sequence is Uracil-DNA glycosylase (217 aa).

Asp62 (proton acceptor) is an active-site residue.

It belongs to the uracil-DNA glycosylase (UDG) superfamily. UNG family.

It localises to the cytoplasm. It catalyses the reaction Hydrolyzes single-stranded DNA or mismatched double-stranded DNA and polynucleotides, releasing free uracil.. Its function is as follows. Excises uracil residues from the DNA which can arise as a result of misincorporation of dUMP residues by DNA polymerase or due to deamination of cytosine. The polypeptide is Uracil-DNA glycosylase (Streptococcus sanguinis (strain SK36)).